The following is a 97-amino-acid chain: Carboxypeptidase inhibitor (97 aa).

The signal sequence occupies residues 1–22; the sequence is MAATLPVFAVVFFAMVLASSQA.

The protein resides in the secreted. Its function is as follows. Potent competitive inhibitor of metallo-carboxypeptidases CPA1, CPA2, CPB, CPN, and TAF1a. Also inhibits human CPA4. Accelerates fibrinolysis in vitro and may contribute to the maintenance of host blood liquidity during feeding. The polypeptide is Carboxypeptidase inhibitor (Rhipicephalus bursa (Tick)).